Here is a 374-residue protein sequence, read N- to C-terminus: tRNA-specific 2-thiouridylase MnmA (374 aa).

ATP contacts are provided by residues 15–22 and Met41; that span reads GMSGGVDS. The interval 101–103 is interaction with target base in tRNA; sequence NPD. The Nucleophile role is filled by Cys106. Cys106 and Cys203 form a disulfide bridge. Gly130 is a binding site for ATP. Positions 153 to 155 are interaction with tRNA; that stretch reads KDQ. Cys203 (cysteine persulfide intermediate) is an active-site residue. An interaction with tRNA region spans residues 311-312; the sequence is RY.

Belongs to the MnmA/TRMU family.

It localises to the cytoplasm. It carries out the reaction S-sulfanyl-L-cysteinyl-[protein] + uridine(34) in tRNA + AH2 + ATP = 2-thiouridine(34) in tRNA + L-cysteinyl-[protein] + A + AMP + diphosphate + H(+). Catalyzes the 2-thiolation of uridine at the wobble position (U34) of tRNA, leading to the formation of s(2)U34. The protein is tRNA-specific 2-thiouridylase MnmA of Lysinibacillus sphaericus (strain C3-41).